Consider the following 842-residue polypeptide: Protein P (842 aa).

Residues 1–177 (MPLSYQHFRR…FCGSPYTWEQ (177 aa)) form a terminal protein domain (TP) region. A spacer region spans residues 178–345 (DLQHGAFLDG…YCLSHLVNLL (168 aa)). The interval 184–238 (FLDGPSRVGKEPFHQQSSRIPSRSPVGPSIQSKYQQSRLGLQSQKGPLARGQQGR) is disordered. The segment covering 212–228 (SIQSKYQQSRLGLQSQK) has biased composition (polar residues). Residues 346-689 (QDWGPCTEHG…YMNLYPVARQ (344 aa)) are polymerase/reverse transcriptase domain (RT). The Reverse transcriptase domain maps to 356-599 (EYHIRIPRTP…YSLNFMGYVI (244 aa)). The Mg(2+) site is built by aspartate 428, aspartate 550, and aspartate 551.

The protein belongs to the hepadnaviridae P protein family.

It catalyses the reaction DNA(n) + a 2'-deoxyribonucleoside 5'-triphosphate = DNA(n+1) + diphosphate. The catalysed reaction is Endonucleolytic cleavage to 5'-phosphomonoester.. Its activity is regulated as follows. Activated by host HSP70 and HSP40 in vitro to be able to bind the epsilon loop of the pgRNA. Because deletion of the RNase H region renders the protein partly chaperone-independent, the chaperones may be needed indirectly to relieve occlusion of the RNA-binding site by this domain. Inhibited by several reverse-transcriptase inhibitors: Lamivudine, Adefovir and Entecavir. Functionally, multifunctional enzyme that converts the viral RNA genome into dsDNA in viral cytoplasmic capsids. This enzyme displays a DNA polymerase activity that can copy either DNA or RNA templates, and a ribonuclease H (RNase H) activity that cleaves the RNA strand of RNA-DNA heteroduplexes in a partially processive 3'- to 5'-endonucleasic mode. Neo-synthesized pregenomic RNA (pgRNA) are encapsidated together with the P protein, and reverse-transcribed inside the nucleocapsid. Initiation of reverse-transcription occurs first by binding the epsilon loop on the pgRNA genome, and is initiated by protein priming, thereby the 5'-end of (-)DNA is covalently linked to P protein. Partial (+)DNA is synthesized from the (-)DNA template and generates the relaxed circular DNA (RC-DNA) genome. After budding and infection, the RC-DNA migrates in the nucleus, and is converted into a plasmid-like covalently closed circular DNA (cccDNA). The activity of P protein does not seem to be necessary for cccDNA generation, and is presumably released from (+)DNA by host nuclear DNA repair machinery. This is Protein P from Hepatitis B virus genotype G (isolate United States/USG17/2002) (HBV-G).